We begin with the raw amino-acid sequence, 225 residues long: MFDDKLSKDLLLSARANNNLAVIRILQDTTSAINPNLQDENGKTALHWAVINLNPLITCYILKIEKVNVNIQDNTGFTVLHYLAKTISNLKFTTINGSFYKSNNYSILKTLFEYGIDVNIQDNKGNTALHYAICKNNFFFIEELLSNNASPFILNKAGFSILYKLNTKNCNFKDEIIESLHSKYPESIELGLVDNKIIIYDIHKLLYNLPYFMYEHNILILGNDA.

ANK repeat units lie at residues 6 to 35, 41 to 71, 75 to 120, and 124 to 153; these read LSKD…AINP, NGKT…NVNI, TGFT…DVNI, and KGNT…SPFI.

The sequence is that of Putative ankyrin repeat protein RBE_1025 from Rickettsia bellii (strain RML369-C).